The chain runs to 175 residues: Protein GrpE (175 aa).

It belongs to the GrpE family. Homodimer.

Its subcellular location is the cytoplasm. Participates actively in the response to hyperosmotic and heat shock by preventing the aggregation of stress-denatured proteins, in association with DnaK and GrpE. It is the nucleotide exchange factor for DnaK and may function as a thermosensor. Unfolded proteins bind initially to DnaJ; upon interaction with the DnaJ-bound protein, DnaK hydrolyzes its bound ATP, resulting in the formation of a stable complex. GrpE releases ADP from DnaK; ATP binding to DnaK triggers the release of the substrate protein, thus completing the reaction cycle. Several rounds of ATP-dependent interactions between DnaJ, DnaK and GrpE are required for fully efficient folding. The sequence is that of Protein GrpE from Thermoplasma acidophilum (strain ATCC 25905 / DSM 1728 / JCM 9062 / NBRC 15155 / AMRC-C165).